The following is a 48-amino-acid chain: MLFCNNNNNNNNNNNNNNNNNNNNNNNNNNNNNNNNNNNSSNNNNFSR.

A disordered region spans residues 1 to 48 (MLFCNNNNNNNNNNNNNNNNNNNNNNNNNNNNNNNNNNNSSNNNNFSR).

This is an uncharacterized protein from Dictyostelium discoideum (Social amoeba).